The chain runs to 592 residues: Aspartate--tRNA(Asp/Asn) ligase (592 aa).

Glu182 contributes to the L-aspartate binding site. Residues 206–209 (QIFK) form an aspartate region. Arg228 contributes to the L-aspartate binding site. ATP-binding positions include 228-230 (RDE) and Gln237. His455 provides a ligand contact to L-aspartate. Glu489 is a binding site for ATP. Residue Arg496 coordinates L-aspartate. Position 541-544 (541-544 (GLDR)) interacts with ATP.

The protein belongs to the class-II aminoacyl-tRNA synthetase family. Type 1 subfamily. As to quaternary structure, homodimer.

It is found in the cytoplasm. It carries out the reaction tRNA(Asx) + L-aspartate + ATP = L-aspartyl-tRNA(Asx) + AMP + diphosphate. In terms of biological role, aspartyl-tRNA synthetase with relaxed tRNA specificity since it is able to aspartylate not only its cognate tRNA(Asp) but also tRNA(Asn). Reaction proceeds in two steps: L-aspartate is first activated by ATP to form Asp-AMP and then transferred to the acceptor end of tRNA(Asp/Asn). This chain is Aspartate--tRNA(Asp/Asn) ligase, found in Thermoanaerobacter sp. (strain X514).